Consider the following 161-residue polypeptide: Large ribosomal subunit protein uL16 (161 aa).

The protein belongs to the universal ribosomal protein uL16 family.

The polypeptide is Large ribosomal subunit protein uL16 (Methanosphaera stadtmanae (strain ATCC 43021 / DSM 3091 / JCM 11832 / MCB-3)).